Consider the following 500-residue polypeptide: Na(+)/H(+) antiporter NhaB (500 aa).

13 helical membrane passes run 11–31, 34–54, 58–78, 96–116, 129–149, 150–170, 205–225, 241–261, 311–331, 350–370, 394–414, 450–470, and 477–497; these read HGFL…FLVL, LLLV…EFIF, MALK…ALLL, VILL…LLLF, AILS…LDAL, TVTA…HRVA, LLMH…VGEP, FFFK…LTCV, ILII…LMVI, FQDA…VAVI, MLYL…VATI, ATPN…APLI, and MVWM…WAVT.

The protein belongs to the NhaB Na(+)/H(+) (TC 2.A.34) antiporter family.

It is found in the cell inner membrane. The enzyme catalyses 2 Na(+)(in) + 3 H(+)(out) = 2 Na(+)(out) + 3 H(+)(in). Its function is as follows. Na(+)/H(+) antiporter that extrudes sodium in exchange for external protons. The polypeptide is Na(+)/H(+) antiporter NhaB (Pseudomonas putida (strain GB-1)).